A 1240-amino-acid chain; its full sequence is Cohesin subunit SA-3 (1240 aa).

The segment covering 1-25 has biased composition (low complexity); that stretch reads MPTLWSPSTQHHGSSSGSESSPLQK. Positions 1-108 are disordered; that stretch reads MPTLWSPSTQ…VSSGNGKNES (108 aa). Residues 97 to 108 show a composition bias toward polar residues; that stretch reads RIVSSGNGKNES. One can recognise an SCD domain in the interval 324–409; that stretch reads FVHRYRDILP…NRFKDRMVSM (86 aa). 2 disordered regions span residues 1077 to 1154 and 1213 to 1240; these read AEAS…PELI and DKMLHSPSSPSEHGLDLLDTTELNMEDF. Residues 1115-1125 are compositionally biased toward polar residues; sequence GPTTPTLTSTA. Residues 1126 to 1141 are compositionally biased toward basic residues; sequence VKRKQSLRTVGKKQKG. Residue serine 1218 is modified to Phosphoserine.

The protein belongs to the SCC3 family. In terms of assembly, component of the meiosis-specific cohesin complex, which also contains the SMC1 (SMC1A or SMC1B) and SMC3 heterodimer. Such complex likely contains RAD21, or the meiosis-specific related protein REC8. Interacts with CCDC79/TERB1; recruiting cohesin to telomeres to develop structural rigidity. In terms of processing, phosphorylated. Testis specific.

Its subcellular location is the nucleus. The protein localises to the chromosome. It localises to the centromere. Functionally, meiosis specific component of cohesin complex. The cohesin complex is required for the cohesion of sister chromatids after DNA replication. The cohesin complex apparently forms a large proteinaceous ring within which sister chromatids can be trapped. At anaphase, the complex is cleaved and dissociates from chromatin, allowing sister chromatids to segregate. The meiosis-specific cohesin complex probably replaces mitosis specific cohesin complex when it dissociates from chromatin during prophase I. In Mus musculus (Mouse), this protein is Cohesin subunit SA-3 (Stag3).